The sequence spans 585 residues: MDLPGDSSPPGQPRLCRQPLTRALWGARSPKRPRLQLPGAPSPLEKASRRVLAVVLEDVMAVHMVPVVPSKQTSIPQHHSYHQDPVHRQPPASPPRQAGWSSQARPPDPLCLCREPLSRIHRTSSTLRRRSRTTPGPEEGPSQKVDRAPQPTLVVMLEDIASPRPPAEGFIDETPNFIIPAQRAEPMRIVRQPTPPPGDLEPPFQPSALPADPLESPPTAPDPALELPSTPPPSSLLRPRLSPWGLAPLFRSVRSKLESFADIFLTPNKTPQPPPPSPPMKLELKIAISEAEQSGAAEGTASVSPRPPIRQWRTQDHNTPALLPKPSLGRSYSCPDLGPPGPGTCTWPPAPPQPSRPRPRRHTVGGGEMARAPPPPRPCLRKEVFPLGGVGASPSLTTSCSSTASTSFSEPAEPRLGSTKGKEPRASKDQVLSEPETKTMGKVSRFRIRRTPARPQLNLTPMGLPRPIRLNKKEFSLEEIYTNKNYQSPTTRRTFETIFEEPRERNGTLIFTSSRKLRRAVEFRDSSLPRSRRPSRGVRAAGGRTVPPNVAPSPDVGPLLQQRLEELDALLLEEETVDREQPHWT.

The residue at position 1 (M1) is an N-acetylmethionine. Residues 1–135 (MDLPGDSSPP…TLRRRSRTTP (135 aa)) are sufficient for heterochromatin association in interphase and chromatin association in anaphase. Disordered regions lie at residues 23-46 (ALWGARSPKRPRLQLPGAPSPLEK), 73-150 (TSIP…RAPQ), and 189-241 (IVRQ…RPRL). The segment at 85–378 (PVHRQPPASP…MARAPPPPRP (294 aa)) is required for the interaction with GRB2 and sufficient to promote the phosphorylation of AKT and cell proliferation. Residues 119–132 (RIHRTSSTLRRRSR) are compositionally biased toward basic residues. Positions 136–365 (GPEEGPSQKV…RPRPRRHTVG (230 aa)) are required for nuclear lamina association. Pro residues predominate over residues 193 to 205 (PTPPPGDLEPPFQ). S277 carries the phosphoserine modification. 2 disordered regions span residues 290 to 445 (EAEQ…KVSR) and 525 to 557 (DSSLPRSRRPSRGVRAAGGRTVPPNVAPSPDVG). Over residues 337 to 356 (LGPPGPGTCTWPPAPPQPSR) the composition is skewed to pro residues. Low complexity predominate over residues 393–409 (SPSLTTSCSSTASTSFS). Residues 518–535 (RRAVEFRDSSLPRSRRPS) are required for nuclear localization.

As to quaternary structure, interacts (via proline-rich region) with GRB2 (via SH3 domain 2). Interacts (via N-terminus) with CBX5.

It is found in the chromosome. The protein localises to the nucleus. The protein resides in the nucleus lamina. It localises to the nucleoplasm. Functions in tethering peripheral heterochromatin to the nuclear lamina during interphase, possibly through the interaction with heterochromatin protein CBX5/HP1 alpha. Might play a role in reattaching heterochromatin to the nuclear lamina at mitotic exit. Promotes myoblast differentiation during skeletal myogenesis, possibly by stimulating transcription factor MyoD activity via binding to CBX5/HP1 alpha. Involved in the positive regulation of the PI3K-Akt-mTOR signaling pathway and in promoting cell proliferation, possibly via binding to GRB2. This Homo sapiens (Human) protein is Proline-rich protein 14 (PRR14).